The sequence spans 141 residues: S-adenosylmethionine decarboxylase proenzyme (141 aa).

The active-site Schiff-base intermediate with substrate; via pyruvic acid is the Ser-63. Ser-63 is modified (pyruvic acid (Ser); by autocatalysis). The active-site Proton acceptor; for processing activity is the His-68. Cys-83 serves as the catalytic Proton donor; for catalytic activity.

Belongs to the prokaryotic AdoMetDC family. Type 1 subfamily. Heterotetramer of two alpha and two beta chains arranged as a dimer of alpha/beta heterodimers. The cofactor is pyruvate. Post-translationally, is synthesized initially as an inactive proenzyme. Formation of the active enzyme involves a self-maturation process in which the active site pyruvoyl group is generated from an internal serine residue via an autocatalytic post-translational modification. Two non-identical subunits are generated from the proenzyme in this reaction, and the pyruvate is formed at the N-terminus of the alpha chain, which is derived from the carboxyl end of the proenzyme. The post-translation cleavage follows an unusual pathway, termed non-hydrolytic serinolysis, in which the side chain hydroxyl group of the serine supplies its oxygen atom to form the C-terminus of the beta chain, while the remainder of the serine residue undergoes an oxidative deamination to produce ammonia and the pyruvoyl group blocking the N-terminus of the alpha chain.

The catalysed reaction is S-adenosyl-L-methionine + H(+) = S-adenosyl 3-(methylsulfanyl)propylamine + CO2. Its pathway is amine and polyamine biosynthesis; S-adenosylmethioninamine biosynthesis; S-adenosylmethioninamine from S-adenosyl-L-methionine: step 1/1. Functionally, catalyzes the decarboxylation of S-adenosylmethionine to S-adenosylmethioninamine (dcAdoMet), the propylamine donor required for the synthesis of the polyamines spermine and spermidine from the diamine putrescine. The sequence is that of S-adenosylmethionine decarboxylase proenzyme from Thermococcus onnurineus (strain NA1).